Reading from the N-terminus, the 107-residue chain is Phosphoribosyl-ATP pyrophosphatase (107 aa).

Belongs to the PRA-PH family.

It localises to the cytoplasm. It carries out the reaction 1-(5-phospho-beta-D-ribosyl)-ATP + H2O = 1-(5-phospho-beta-D-ribosyl)-5'-AMP + diphosphate + H(+). It functions in the pathway amino-acid biosynthesis; L-histidine biosynthesis; L-histidine from 5-phospho-alpha-D-ribose 1-diphosphate: step 2/9. This is Phosphoribosyl-ATP pyrophosphatase from Novosphingobium aromaticivorans (strain ATCC 700278 / DSM 12444 / CCUG 56034 / CIP 105152 / NBRC 16084 / F199).